Consider the following 470-residue polypeptide: Cell division protein FtsP (470 aa).

Residues 1 to 27 (MSFSRRQFLQASGIALCAGAIPLRANA) constitute a signal peptide (tat-type signal). The Plastocyanin-like domain maps to 222 to 287 (VEVSRGWVRL…RREILVDMTN (66 aa)).

The protein belongs to the FtsP family. In terms of processing, predicted to be exported by the Tat system. The position of the signal peptide cleavage has not been experimentally proven.

It localises to the periplasm. Its function is as follows. Cell division protein that is required for growth during stress conditions. May be involved in protecting or stabilizing the divisomal assembly under conditions of stress. This is Cell division protein FtsP from Salmonella typhi.